The chain runs to 686 residues: MRLLTLLGLLCGSVATPLGPKWPEPVFGRLASPGFPGEYANDQERRWTLTAPPGYRLRLYFTHFDLELSHLCEYDFVKLSSGAKVLATLCGQESTDTERAPGKDTFYSLGSSLDITFRSDYSNEKPFTGFEAFYAAEDIDECQVAPGEAPTCDHHCHNHLGGFYCSCRAGYVLHRNKRTCSALCSGQVFTQRSGELSSPEYPRPYPKLSSCTYSISLEEGFSVILDFVESFDVETHPETLCPYDFLKIQTDREEHGPFCGKTLPHRIETKSNTVTITFVTDESGDHTGWKIHYTSTAQPCPYPMAPPNGHVSPVQAKYILKDSFSIFCETGYELLQGHLPLKSFTAVCQKDGSWDRPMPACSIVDCGPPDDLPSGRVEYITGPGVTTYKAVIQYSCEETFYTMKVNDGKYVCEADGFWTSSKGEKSLPVCEPVCGLSARTTGGRIYGGQKAKPGDFPWQVLILGGTTAAGALLYDNWVLTAAHAVYEQKHDASALDIRMGTLKRLSPHYTQAWSEAVFIHEGYTHDAGFDNDIALIKLNNKVVINSNITPICLPRKEAESFMRTDDIGTASGWGLTQRGFLARNLMYVDIPIVDHQKCTAAYEKPPYPRGSVTANMLCAGLESGGKDSCRGDSGGALVFLDSETERWFVGGIVSWGSMNCGEAGQYGVYTKVINYIPWIENIISDF.

The first 15 residues, 1–15 (MRLLTLLGLLCGSVA), serve as a signal peptide directing secretion. In terms of domain architecture, CUB 1 spans 16 to 137 (TPLGPKWPEP…TGFEAFYAAE (122 aa)). Ca(2+) contacts are provided by E67, D75, D120, S122, N123, D138, I139, and E141. A disulfide bond links C72 and C90. Residues 138-181 (DIDECQVAPGEAPTCDHHCHNHLGGFYCSCRAGYVLHRNKRTCS) enclose the EGF-like; calcium-binding domain. 12 disulfide bridges follow: C142–C156, C152–C165, C167–C180, C184–C211, C241–C259, C300–C348, C328–C361, C366–C412, C396–C430, C434–C552, C598–C618, and C629–C660. Residues N158, H159, and G162 each contribute to the Ca(2+) site. N158 carries the (3R)-3-hydroxyasparagine modification. The region spanning 184 to 296 (CSGQVFTQRS…TGWKIHYTST (113 aa)) is the CUB 2 domain. 2 consecutive Sushi domains span residues 298–363 (QPCP…ACSI) and 364–432 (VDCG…VCEP). The Peptidase S1 domain maps to 445 to 684 (IYGGQKAKPG…YIPWIENIIS (240 aa)). Catalysis depends on charge relay system residues H483 and D532. S633 (charge relay system) is an active-site residue.

It belongs to the peptidase S1 family. Homodimer; disulfide-linked. Binds MBL2. Isoform 2 binds to MASP1. Binds SERPING1. Dimerization and MBL2 binding requires calcium ions. In terms of processing, the iron and 2-oxoglutarate dependent 3-hydroxylation of aspartate and asparagine is (R) stereospecific within EGF domains. Post-translationally, activated by cleavage after Arg-444. The uncleaved zymogen is inactive towards synthetic substrates, but has sufficient activity to effect autocatalytic cleavage. As to expression, plasma.

It is found in the secreted. It catalyses the reaction Selective cleavage after Arg-223 in complement component C2 (-Ser-Leu-Gly-Arg-|-Lys-Ile-Gln-Ile) and after Arg-76 in complement component C4 (-Gly-Leu-Gln-Arg-|-Ala-Leu-Glu-Ile).. In terms of biological role, serum protease that plays an important role in the activation of the complement system via mannose-binding lectin. After activation by auto-catalytic cleavage it cleaves C2 and C4, leading to their activation and to the formation of C3 convertase. This Homo sapiens (Human) protein is Mannan-binding lectin serine protease 2 (MASP2).